A 154-amino-acid polypeptide reads, in one-letter code: SsrA-binding protein (154 aa).

The segment at 131–154 (DKRQDLKQKEAKRDIERAFKERQQ) is disordered. Residues 132–154 (KRQDLKQKEAKRDIERAFKERQQ) show a composition bias toward basic and acidic residues.

Belongs to the SmpB family.

The protein resides in the cytoplasm. Its function is as follows. Required for rescue of stalled ribosomes mediated by trans-translation. Binds to transfer-messenger RNA (tmRNA), required for stable association of tmRNA with ribosomes. tmRNA and SmpB together mimic tRNA shape, replacing the anticodon stem-loop with SmpB. tmRNA is encoded by the ssrA gene; the 2 termini fold to resemble tRNA(Ala) and it encodes a 'tag peptide', a short internal open reading frame. During trans-translation Ala-aminoacylated tmRNA acts like a tRNA, entering the A-site of stalled ribosomes, displacing the stalled mRNA. The ribosome then switches to translate the ORF on the tmRNA; the nascent peptide is terminated with the 'tag peptide' encoded by the tmRNA and targeted for degradation. The ribosome is freed to recommence translation, which seems to be the essential function of trans-translation. This Listeria innocua serovar 6a (strain ATCC BAA-680 / CLIP 11262) protein is SsrA-binding protein.